The chain runs to 514 residues: Peptide chain release factor 3 (514 aa).

The region spanning 8-268 (KKRRTFAIIS…IFLKFAPEPH (261 aa)) is the tr-type G domain. Residues 17 to 24 (SHPDAGKT), 85 to 89 (DTPGH), and 139 to 142 (NKLD) contribute to the GTP site.

Belongs to the TRAFAC class translation factor GTPase superfamily. Classic translation factor GTPase family. PrfC subfamily.

The protein localises to the cytoplasm. Its function is as follows. Increases the formation of ribosomal termination complexes and stimulates activities of RF-1 and RF-2. It binds guanine nucleotides and has strong preference for UGA stop codons. It may interact directly with the ribosome. The stimulation of RF-1 and RF-2 is significantly reduced by GTP and GDP, but not by GMP. This Streptococcus pneumoniae serotype 2 (strain D39 / NCTC 7466) protein is Peptide chain release factor 3.